Here is a 578-residue protein sequence, read N- to C-terminus: ATP-dependent RNA helicase dbp3 (578 aa).

The span at 59 to 69 (KRSADEEASVK) shows a compositional bias: basic and acidic residues. Positions 59 to 117 (KRSADEEASVKRKEKKSKHEHKKHKKDKPSADKDRISKKDKKKSKKGKSKTKEESIEIN) are disordered. Basic residues predominate over residues 70 to 85 (RKEKKSKHEHKKHKKD). Basic and acidic residues predominate over residues 86-95 (KPSADKDRIS). The span at 96 to 107 (KKDKKKSKKGKS) shows a compositional bias: basic residues. Residues 167–193 (LQFDELDVSAKLREGLKNYKEPTPIQA) carry the Q motif motif. The Helicase ATP-binding domain occupies 196 to 373 (WPYLLAGRDV…ATFLKDPVKI (178 aa)). Residue 209–216 (AETGSGKT) participates in ATP binding. The short motif at 316-319 (DEAD) is the DEAD box element. In terms of domain architecture, Helicase C-terminal spans 402 to 550 (MLDNLLRKHL…DIPEGLFKFG (149 aa)).

It belongs to the DEAD box helicase family. DDX5/DBP2 subfamily.

The protein resides in the nucleus. Its subcellular location is the nucleolus. It catalyses the reaction ATP + H2O = ADP + phosphate + H(+). In terms of biological role, ATP-dependent RNA helicase required for 60S ribosomal subunit synthesis. Involved in efficient pre-rRNA processing, predominantly at site A3, which is necessary for the normal formation of 25S and 5.8S rRNAs. The protein is ATP-dependent RNA helicase dbp3 (dbp3) of Schizosaccharomyces pombe (strain 972 / ATCC 24843) (Fission yeast).